The sequence spans 329 residues: Malate dehydrogenase (329 aa).

NAD(+) is bound at residue 12-18 (GAAGQIG). 2 residues coordinate substrate: Arg-93 and Arg-99. Residues Asn-106, Gln-113, and 130-132 (TGN) contribute to the NAD(+) site. Positions 132 and 163 each coordinate substrate. His-188 acts as the Proton acceptor in catalysis.

It belongs to the LDH/MDH superfamily. MDH type 2 family.

The enzyme catalyses (S)-malate + NAD(+) = oxaloacetate + NADH + H(+). Catalyzes the reversible oxidation of malate to oxaloacetate. The polypeptide is Malate dehydrogenase (Mycobacterium ulcerans (strain Agy99)).